Reading from the N-terminus, the 344-residue chain is Nicotinate-nucleotide--dimethylbenzimidazole phosphoribosyltransferase (344 aa).

Glu-305 serves as the catalytic Proton acceptor.

The protein belongs to the CobT family.

It catalyses the reaction 5,6-dimethylbenzimidazole + nicotinate beta-D-ribonucleotide = alpha-ribazole 5'-phosphate + nicotinate + H(+). The protein operates within nucleoside biosynthesis; alpha-ribazole biosynthesis; alpha-ribazole from 5,6-dimethylbenzimidazole: step 1/2. Catalyzes the synthesis of alpha-ribazole-5'-phosphate from nicotinate mononucleotide (NAMN) and 5,6-dimethylbenzimidazole (DMB). The chain is Nicotinate-nucleotide--dimethylbenzimidazole phosphoribosyltransferase from Agrobacterium fabrum (strain C58 / ATCC 33970) (Agrobacterium tumefaciens (strain C58)).